Here is a 415-residue protein sequence, read N- to C-terminus: Serine hydroxymethyltransferase (415 aa).

(6S)-5,6,7,8-tetrahydrofolate is bound by residues Leu120 and 124 to 126 (GHL). N6-(pyridoxal phosphate)lysine is present on Lys229.

The protein belongs to the SHMT family. Homodimer. The cofactor is pyridoxal 5'-phosphate.

The protein resides in the cytoplasm. The catalysed reaction is (6R)-5,10-methylene-5,6,7,8-tetrahydrofolate + glycine + H2O = (6S)-5,6,7,8-tetrahydrofolate + L-serine. Its pathway is one-carbon metabolism; tetrahydrofolate interconversion. It participates in amino-acid biosynthesis; glycine biosynthesis; glycine from L-serine: step 1/1. Its function is as follows. Catalyzes the reversible interconversion of serine and glycine with tetrahydrofolate (THF) serving as the one-carbon carrier. This reaction serves as the major source of one-carbon groups required for the biosynthesis of purines, thymidylate, methionine, and other important biomolecules. Also exhibits THF-independent aldolase activity toward beta-hydroxyamino acids, producing glycine and aldehydes, via a retro-aldol mechanism. This chain is Serine hydroxymethyltransferase, found in Desulforudis audaxviator (strain MP104C).